The primary structure comprises 394 residues: GPI transamidase component GAB1 (394 aa).

The Cytoplasmic segment spans residues 1-135; the sequence is MDSTALKVAL…TLLSCISRSS (135 aa). A helical membrane pass occupies residues 136–156; sequence IIFTNFAISSSLYCILAEGNV. Over 157–160 the chain is Lumenal; that stretch reads LLSS. The chain crosses the membrane as a helical span at residues 161–181; the sequence is VMISISGYLSVYPILLLIPLL. Residues 182 to 190 lie on the Cytoplasmic side of the membrane; it reads GMLKSWRQR. The chain crosses the membrane as a helical span at residues 191–211; sequence ILSAIVSILSLLILLLFSYSI. Topologically, residues 212 to 224 are lumenal; that stretch reads LGSQSWSFLTQVY. Residues 225–245 form a helical membrane-spanning segment; it reads GSIITFEKVFPNLGLWWYFFI. The may be involved in recognition of long-chain fatty acids in GPI stretch occupies residues 235–255; sequence PNLGLWWYFFIEMFDTFIPFF. The Cytoplasmic segment spans residues 246-250; it reads EMFDT. A helical membrane pass occupies residues 251 to 271; sequence FIPFFKAVFNIFIAVFITPFT. Over 272-297 the chain is Lumenal; it reads LRYHKQPFYAFILCIGWIVLTKPYPS. The helical transmembrane segment at 298–318 threads the bilayer; sequence LGDAGFFFSFLPFFTPLFGYL. The Cytoplasmic portion of the chain corresponds to 319–324; sequence RYPIIS. A helical membrane pass occupies residues 325-345; the sequence is ALLFLHAIVLAPIFYHLWVVL. Topologically, residues 346–351 are lumenal; that stretch reads GSGNSN. The helical transmembrane segment at 352–372 threads the bilayer; that stretch reads FFYAISLVYALAIASILVDLN. At 373–394 the chain is on the cytoplasmic side; that stretch reads WAMLRIEYDNGIPNFKLKVTQI.

This sequence belongs to the PIGU family. Forms a complex with GPI16, GPI17, GPI8 and GAA1.

Its subcellular location is the endoplasmic reticulum membrane. The protein operates within glycolipid biosynthesis; glycosylphosphatidylinositol-anchor biosynthesis. Its function is as follows. Component of the GPI transamidase complex. May be involved in the recognition of either the GPI attachment signal or the lipid portion of GPI. This Saccharomyces cerevisiae (strain ATCC 204508 / S288c) (Baker's yeast) protein is GPI transamidase component GAB1 (GAB1).